We begin with the raw amino-acid sequence, 185 residues long: Prorelaxin H1 (185 aa).

Residues 1–22 (MPRLFLFHLLEFCLLLNQFSRA) form the signal peptide. Cystine bridges form between cysteine 35-cysteine 172, cysteine 47-cysteine 185, and cysteine 171-cysteine 176. A propeptide spans 56-158 (SLSQEDAPQT…KYLGLDTHSQ (103 aa)) (connecting peptide).

Belongs to the insulin family. Heterodimer of a B chain and an A chain linked by two disulfide bonds. As to expression, prostate. Not expressed in placenta, decidua or ovary.

It localises to the secreted. Functionally, relaxin is an ovarian hormone that acts with estrogen to produce dilatation of the birth canal in many mammals. May be involved in remodeling of connective tissues during pregnancy, promoting growth of pubic ligaments and ripening of the cervix. The sequence is that of Prorelaxin H1 (RLN1) from Homo sapiens (Human).